The following is a 957-amino-acid chain: Vacuolar membrane protease (957 aa).

Topologically, residues 1-10 (MARYNPFSFT) are cytoplasmic. The helical transmembrane segment at 11-31 (PGPVVFFTTVIYVGLFAALLV) threads the bilayer. The Vacuolar portion of the chain corresponds to 32–369 (THLTVPDYPS…RVFVVFQLHT (338 aa)). Asparagine 48, asparagine 105, and asparagine 136 each carry an N-linked (GlcNAc...) asparagine glycan. The Zn(2+) site is built by histidine 152 and aspartate 164. Residue glutamate 198 is the Proton acceptor of the active site. Glutamate 199, glutamate 224, and histidine 297 together coordinate Zn(2+). The helical transmembrane segment at 370 to 390 (LFALCVTLLVVAPIALIGLTF) threads the bilayer. Residues 391–423 (GLSKADKNYLLARKAFVYSSDDDNPVQLYGWRG) lie on the Cytoplasmic side of the membrane. Residues 424–444 (FFRFPIVFVSATAVVVALAYL) form a helical membrane-spanning segment. The Vacuolar portion of the chain corresponds to 445 to 450 (LVRFNA). A helical transmembrane segment spans residues 451-471 (FIIYSSPFAVWSMMLSAWFFV). Topologically, residues 472–490 (AWFFSRGADAMRPSALQRM) are cytoplasmic. The helical transmembrane segment at 491–511 (YALIWLFIGSFVLLTIITVFV) threads the bilayer. The Vacuolar portion of the chain corresponds to 512 to 521 (NNYQVVAGYP). A helical membrane pass occupies residues 522-542 (ALFYFAVVFAALMLSYLELFF). The Cytoplasmic segment spans residues 543–642 (APTKSAYARH…YPGEQEWSGK (100 aa)). Disordered regions lie at residues 560 to 591 (RRNS…DATE) and 603 to 628 (FTRY…RRLD). Polar residues predominate over residues 564-577 (ESASRPLTGSTTAA). The chain crosses the membrane as a helical span at residues 643-663 (LPSWIWIIQLLLLAPLVIVLV). Residues 664 to 685 (GQVALLLTSALYQTPSDGNSPL) are Vacuolar-facing. Residues 686–706 (FIYLAIAALSVLLLAPTGPFI) form a helical membrane-spanning segment. At 707–713 (HRFTYHV) the chain is on the cytoplasmic side. Residues 714 to 734 (PTFLFLVCLATVIYNLVAFPF) traverse the membrane as a helical segment. The Vacuolar segment spans residues 735–957 (SRDHRLKVYF…LVEGFKQFEI (223 aa)). Residues asparagine 782, asparagine 818, and asparagine 834 are each glycosylated (N-linked (GlcNAc...) asparagine).

It belongs to the peptidase M28 family. Zn(2+) serves as cofactor.

The protein localises to the vacuole membrane. Functionally, may be involved in vacuolar sorting and osmoregulation. The sequence is that of Vacuolar membrane protease from Pyrenophora tritici-repentis (strain Pt-1C-BFP) (Wheat tan spot fungus).